The sequence spans 119 residues: MISKPDKNKLRLKRHKRIRGKISGTAERPRLSVFRSNKNIYAQLIDDVEGVTLASASTNDKNISAEGSKMEQAAEVGKALAETAAKKNIKSVVFDRSGYLYHGRIQALADAARENGLEF.

Belongs to the universal ribosomal protein uL18 family. In terms of assembly, part of the 50S ribosomal subunit; part of the 5S rRNA/L5/L18/L25 subcomplex. Contacts the 5S and 23S rRNAs.

In terms of biological role, this is one of the proteins that bind and probably mediate the attachment of the 5S RNA into the large ribosomal subunit, where it forms part of the central protuberance. The protein is Large ribosomal subunit protein uL18 of Lactobacillus johnsonii (strain CNCM I-12250 / La1 / NCC 533).